A 101-amino-acid polypeptide reads, in one-letter code: Urease subunit beta (101 aa).

This sequence belongs to the urease beta subunit family. As to quaternary structure, heterotrimer of UreA (gamma), UreB (beta) and UreC (alpha) subunits. Three heterotrimers associate to form the active enzyme.

Its subcellular location is the cytoplasm. The enzyme catalyses urea + 2 H2O + H(+) = hydrogencarbonate + 2 NH4(+). It functions in the pathway nitrogen metabolism; urea degradation; CO(2) and NH(3) from urea (urease route): step 1/1. This chain is Urease subunit beta, found in Jannaschia sp. (strain CCS1).